Reading from the N-terminus, the 114-residue chain is Non-specific lipid-transfer protein 1 (114 aa).

The first 23 residues, 1–23, serve as a signal peptide directing secretion; it reads MEMVSKIACFVLLCMVVVAPHAE. Disulfide bonds link Cys-27/Cys-73, Cys-37/Cys-50, Cys-51/Cys-96, and Cys-71/Cys-110.

The protein belongs to the plant LTP family.

Plant non-specific lipid-transfer proteins transfer phospholipids as well as galactolipids across membranes. May play a role in wax or cutin deposition in the cell walls of expanding epidermal cells and certain secretory tissues. The polypeptide is Non-specific lipid-transfer protein 1 (LTP1) (Solanum pennellii (Tomato)).